A 369-amino-acid polypeptide reads, in one-letter code: S-(hydroxymethyl)glutathione dehydrogenase (369 aa).

Zn(2+)-binding residues include Cys-40, His-62, Cys-92, Cys-95, Cys-98, Cys-106, and Cys-169.

It belongs to the zinc-containing alcohol dehydrogenase family. Class-III subfamily. In terms of assembly, homodimer. Zn(2+) is required as a cofactor.

The protein resides in the cytoplasm. It catalyses the reaction S-(hydroxymethyl)glutathione + NADP(+) = S-formylglutathione + NADPH + H(+). It carries out the reaction S-(hydroxymethyl)glutathione + NAD(+) = S-formylglutathione + NADH + H(+). The enzyme catalyses a primary alcohol + NAD(+) = an aldehyde + NADH + H(+). The catalysed reaction is a secondary alcohol + NAD(+) = a ketone + NADH + H(+). It catalyses the reaction S-nitrosoglutathione + NADH + H(+) = S-(hydroxysulfenamide)glutathione + NAD(+). Its function is as follows. Has high formaldehyde dehydrogenase activity in the presence of glutathione and catalyzes the oxidation of normal alcohols in a reaction that is not GSH-dependent. In addition, hemithiolacetals other than those formed from GSH, including omega-thiol fatty acids, also are substrates. Also acts as a S-nitroso-glutathione reductase by catalyzing the NADH-dependent reduction of S-nitrosoglutathione. This Escherichia coli O6:H1 (strain CFT073 / ATCC 700928 / UPEC) protein is S-(hydroxymethyl)glutathione dehydrogenase (frmA).